The primary structure comprises 518 residues: uncharacterized protein (518 aa).

2 ABC transporter domains span residues 4–260 (LSVK…QLEA) and 324–518 (LIFE…TKVL). ATP-binding positions include 36–43 (GANGEGKS) and 357–364 (GANGIGKT).

This sequence belongs to the ABC transporter superfamily.

This is an uncharacterized protein from Bacillus subtilis (strain 168).